A 503-amino-acid polypeptide reads, in one-letter code: Probable cytosol aminopeptidase (503 aa).

Lys270 and Asp275 together coordinate Mn(2+). Lys282 is an active-site residue. Mn(2+) contacts are provided by Asp293, Asp352, and Glu354. The active site involves Arg356.

The protein belongs to the peptidase M17 family. The cofactor is Mn(2+).

It is found in the cytoplasm. The enzyme catalyses Release of an N-terminal amino acid, Xaa-|-Yaa-, in which Xaa is preferably Leu, but may be other amino acids including Pro although not Arg or Lys, and Yaa may be Pro. Amino acid amides and methyl esters are also readily hydrolyzed, but rates on arylamides are exceedingly low.. The catalysed reaction is Release of an N-terminal amino acid, preferentially leucine, but not glutamic or aspartic acids.. Functionally, presumably involved in the processing and regular turnover of intracellular proteins. Catalyzes the removal of unsubstituted N-terminal amino acids from various peptides. The polypeptide is Probable cytosol aminopeptidase (Erwinia tasmaniensis (strain DSM 17950 / CFBP 7177 / CIP 109463 / NCPPB 4357 / Et1/99)).